A 563-amino-acid chain; its full sequence is Dihydroxy-acid dehydratase (563 aa).

Position 51 (cysteine 51) interacts with [2Fe-2S] cluster. Aspartate 83 serves as a coordination point for Mg(2+). Residue cysteine 124 participates in [2Fe-2S] cluster binding. Mg(2+) contacts are provided by aspartate 125 and lysine 126. Lysine 126 carries the post-translational modification N6-carboxylysine. Residue cysteine 196 participates in [2Fe-2S] cluster binding. Position 448 (glutamate 448) interacts with Mg(2+). The Proton acceptor role is filled by serine 474.

This sequence belongs to the IlvD/Edd family. As to quaternary structure, homodimer. It depends on [2Fe-2S] cluster as a cofactor. Mg(2+) serves as cofactor.

It catalyses the reaction (2R)-2,3-dihydroxy-3-methylbutanoate = 3-methyl-2-oxobutanoate + H2O. It carries out the reaction (2R,3R)-2,3-dihydroxy-3-methylpentanoate = (S)-3-methyl-2-oxopentanoate + H2O. The protein operates within amino-acid biosynthesis; L-isoleucine biosynthesis; L-isoleucine from 2-oxobutanoate: step 3/4. It functions in the pathway amino-acid biosynthesis; L-valine biosynthesis; L-valine from pyruvate: step 3/4. Functions in the biosynthesis of branched-chain amino acids. Catalyzes the dehydration of (2R,3R)-2,3-dihydroxy-3-methylpentanoate (2,3-dihydroxy-3-methylvalerate) into 2-oxo-3-methylpentanoate (2-oxo-3-methylvalerate) and of (2R)-2,3-dihydroxy-3-methylbutanoate (2,3-dihydroxyisovalerate) into 2-oxo-3-methylbutanoate (2-oxoisovalerate), the penultimate precursor to L-isoleucine and L-valine, respectively. This is Dihydroxy-acid dehydratase from Polynucleobacter necessarius subsp. necessarius (strain STIR1).